The following is a 70-amino-acid chain: Metallothionein-like protein 1 (70 aa).

Belongs to the metallothionein superfamily. Type 15 family.

In terms of biological role, metallothioneins have a high content of cysteine residues that bind various heavy metals. In Festuca rubra (Red fescue), this protein is Metallothionein-like protein 1 (MT1).